The sequence spans 111 residues: Large ribosomal subunit protein uL23 (111 aa).

Belongs to the universal ribosomal protein uL23 family. As to quaternary structure, part of the 50S ribosomal subunit. Contacts protein L29, and trigger factor when it is bound to the ribosome.

In terms of biological role, one of the early assembly proteins it binds 23S rRNA. One of the proteins that surrounds the polypeptide exit tunnel on the outside of the ribosome. Forms the main docking site for trigger factor binding to the ribosome. This chain is Large ribosomal subunit protein uL23, found in Chlamydia muridarum (strain MoPn / Nigg).